Here is a 1228-residue protein sequence, read N- to C-terminus: AT-rich interactive domain-containing protein 4B (1228 aa).

2 disordered regions span residues 123–167 (LPLT…DDRK) and 266–307 (KTEL…PFPE). Phosphoserine occurs at positions 276, 295, and 296. The segment covering 277 to 305 (EAEEEEEEEDDEKEKEDNSSEEEEEIEPF) has biased composition (acidic residues). One can recognise an ARID domain in the interval 306-398 (PEERENFLQQ…YLYGFEEYCR (93 aa)). Glycyl lysine isopeptide (Lys-Gly) (interchain with G-Cter in SUMO2) cross-links involve residues Lys428 and Lys461. Residues 437–464 (EVNVEDSKNMIPKEETPAEDESERKENI) are compositionally biased toward basic and acidic residues. 6 disordered regions span residues 437-466 (EVNV…NIKP), 479-525 (PAQS…EQAR), 539-606 (RPAD…SDTG), 620-802 (LQAS…EEKR), 825-1129 (LNNS…RLPK), and 1168-1204 (SEVA…SITA). Ser482 is modified (phosphoserine). Positions 483–511 (DQEKEANITKLEEKESLEDKDGATARAEE) are enriched in basic and acidic residues. The segment covering 546–555 (PKIKHRKKIK) has biased composition (basic residues). Over residues 556 to 569 (NKLDKEKDRDEKYS) the composition is skewed to basic and acidic residues. Phosphoserine is present on residues Ser579, Ser581, and Ser588. Residues 596 to 606 (DLADAKNSDTG) show a composition bias toward basic and acidic residues. Ser630 carries the phosphoserine modification. 2 stretches are compositionally biased toward basic and acidic residues: residues 635-667 (ERCA…KEEL) and 691-700 (SPERLRKDVE). Lys664 is covalently cross-linked (Glycyl lysine isopeptide (Lys-Gly) (interchain with G-Cter in SUMO2)). Phosphoserine is present on residues Ser691 and Ser703. The segment covering 701-713 (AISEDTDFEEEDE) has biased composition (acidic residues). Residue Thr706 is modified to Phosphothreonine. The segment covering 721–730 (VKKDTTDKAL) has biased composition (basic and acidic residues). Residues 744-753 (IQTNCLQSGS) show a composition bias toward polar residues. Composition is skewed to basic and acidic residues over residues 755–765 (GKKEDRTKSKE), 825–843 (LNNS…RKDV), and 911–926 (KPVE…RKTE). A compositionally biased stretch (polar residues) spans 927-937 (FPSSGSNSVLN). Ser930 bears the Phosphoserine mark. Thr942 carries the phosphothreonine modification. Residues 944-965 (ESPSSVTVTETSQQQSSVTVSV) are compositionally biased toward low complexity. Phosphoserine is present on Ser945. The segment covering 972–981 (EEVRSIKSET) has biased composition (basic and acidic residues). A compositionally biased stretch (low complexity) spans 1003–1017 (SSPAGFNASVSSSSS). Over residues 1046 to 1064 (KKQKRSHKATVVNNKKKGK) the composition is skewed to basic residues. Thr1066 is modified (phosphothreonine). A phosphoserine mark is found at Ser1068, Ser1069, Ser1071, and Ser1075. Over residues 1112–1124 (KNGDKDPDLKEPS) the composition is skewed to basic and acidic residues. Residues 1141–1186 (ENMTSAERISILQEKLQEIRKHYLSLKSEVASIDRRRKRLKKKERE) are a coiled coil. A compositionally biased stretch (low complexity) spans 1188–1204 (AATSSSSSSPSSSSITA).

As to quaternary structure, component of a Sin3A corepressor complex consisting of SIN3A, SAP130, SUDS3/SAP45, SAP180, HDAC1 and HDAC2. Interacts with ARID4A. Interacts with AR.

The protein localises to the nucleus. Acts as a transcriptional repressor. May function in the assembly and/or enzymatic activity of the Sin3A corepressor complex or in mediating interactions between the complex and other regulatory complexes. Plays a role in the regulation of epigenetic modifications at the PWS/AS imprinting center near the SNRPN promoter, where it might function as part of a complex with RB1 and ARID4A. Involved in spermatogenesis, together with ARID4A, where it functions as a transcriptional coactivator for AR (androgen receptor) and enhances expression of genes required for sperm maturation. Regulates expression of the tight junction protein CLDN3 in the testis, which is important for integrity of the blood-testis barrier. Plays a role in myeloid homeostasis where it regulates the histone methylation state of bone marrow cells and expression of various genes involved in hematopoiesis. May function as a leukemia suppressor. This Rattus norvegicus (Rat) protein is AT-rich interactive domain-containing protein 4B (Arid4b).